Consider the following 330-residue polypeptide: Putative protein N-methyltransferase FAM86B1 (330 aa).

Residues W139, 165–167, W228, and A247 contribute to the S-adenosyl-L-methionine site; that span reads GSG.

The protein belongs to the class I-like SAM-binding methyltransferase superfamily. EEF2KMT family.

The protein is Putative protein N-methyltransferase FAM86B1 of Homo sapiens (Human).